The primary structure comprises 173 residues: Alpha-crystallin A chain (173 aa).

At M1 the chain carries N-acetylmethionine. Residues 1 to 63 are required for complex formation with BFSP1 and BFSP2; it reads MDVTIQHPWF…RTVLDSGISE (63 aa). Q6 carries the deamidated glutamine; partial modification. Phosphoserine is present on S45. Q50 bears the Deamidated glutamine; partial mark. In terms of domain architecture, sHSP spans 52 to 162; that stretch reads LFRTVLDSGI…GHSERAIPVS (111 aa). N6-acetyllysine is present on K70. Position 90 is a deamidated glutamine; partial (Q90). An N6-acetyllysine modification is found at K99. H100 lines the Zn(2+) pocket. The residue at position 101 (N101) is a Deamidated asparagine; partial. Zn(2+) is bound by residues E102 and H107. S122 carries the post-translational modification Phosphoserine. N123 is subject to Deamidated asparagine; partial. The segment at 145–173 is disordered; it reads KVQSGLDAGHSERAIPVSREEKPSSAPSS. The residue at position 147 (Q147) is a Deamidated glutamine; partial. A compositionally biased stretch (basic and acidic residues) spans 153 to 167; that stretch reads GHSERAIPVSREEKP. H154 lines the Zn(2+) pocket. An O-linked (GlcNAc) serine glycan is attached at S162.

The protein belongs to the small heat shock protein (HSP20) family. In terms of assembly, heteromer composed of three CRYAA and one CRYAB subunits. Inter-subunit bridging via zinc ions enhances stability, which is crucial as there is no protein turn over in the lens. Can also form homodimers and homotetramers (dimers of dimers) which serve as the building blocks of homooligomers. Within homooligomers, the zinc-binding motif is created from residues of 3 different molecules. His-100 and Glu-102 from one molecule are ligands of the zinc ion, and His-107 and His-154 residues from additional molecules complete the site with tetrahedral coordination geometry. Part of a complex required for lens intermediate filament formation composed of BFSP1, BFSP2 and CRYAA. Acetylation at Lys-70 may increase chaperone activity. In terms of processing, undergoes age-dependent proteolytical cleavage at the C-terminus.

The protein localises to the cytoplasm. It localises to the nucleus. Its function is as follows. Contributes to the transparency and refractive index of the lens. Acts as a chaperone, preventing aggregation of various proteins under a wide range of stress conditions. Required for the correct formation of lens intermediate filaments as part of a complex composed of BFSP1, BFSP2 and CRYAA. The chain is Alpha-crystallin A chain (CRYAA) from Oryctolagus cuniculus (Rabbit).